Here is a 412-residue protein sequence, read N- to C-terminus: uncharacterized protein (412 aa).

7 consecutive repeat copies span residues 112–116 (GSIRS), 117–121 (GSIRS), 122–126 (GSIRD), 127–131 (GSIRD), 132–136 (GSIRS), 137–141 (GNIRD), and 142–146 (GSVRS). Positions 112 to 146 (GSIRSGSIRSGSIRDGSIRDGSIRSGNIRDGSVRS) are 7 X 5 AA tandem repeats of G-[NS]-[IV]-R-[DS]. Over residues 116–126 (SGSIRSGSIRD) the composition is skewed to low complexity. The tract at residues 116–209 (SGSIRSGSIR…SEKSIKPSTK (94 aa)) is disordered. The span at 192-209 (NHYAESEYSEKSIKPSTK) shows a compositional bias: basic and acidic residues.

It belongs to the asfivirus B407L family.

This is an uncharacterized protein from Ornithodoros (relapsing fever ticks).